Reading from the N-terminus, the 272-residue chain is Shikimate dehydrogenase (NADP(+)) (272 aa).

Shikimate contacts are provided by residues 14 to 16 (SKS) and threonine 61. Lysine 65 serves as the catalytic Proton acceptor. Glutamate 77 contributes to the NADP(+) binding site. Shikimate contacts are provided by asparagine 86 and aspartate 102. Residues 126–130 (GAGGA), 149–154 (NRTASR), and methionine 213 contribute to the NADP(+) site. Position 215 (tyrosine 215) interacts with shikimate. Residue glycine 237 participates in NADP(+) binding.

This sequence belongs to the shikimate dehydrogenase family. As to quaternary structure, homodimer.

The enzyme catalyses shikimate + NADP(+) = 3-dehydroshikimate + NADPH + H(+). It participates in metabolic intermediate biosynthesis; chorismate biosynthesis; chorismate from D-erythrose 4-phosphate and phosphoenolpyruvate: step 4/7. In terms of biological role, involved in the biosynthesis of the chorismate, which leads to the biosynthesis of aromatic amino acids. Catalyzes the reversible NADPH linked reduction of 3-dehydroshikimate (DHSA) to yield shikimate (SA). The chain is Shikimate dehydrogenase (NADP(+)) from Salmonella paratyphi A (strain ATCC 9150 / SARB42).